We begin with the raw amino-acid sequence, 434 residues long: Serine hydroxymethyltransferase (434 aa).

(6S)-5,6,7,8-tetrahydrofolate-binding positions include Leu-124 and 128-130; that span reads GHL. An N6-(pyridoxal phosphate)lysine modification is found at Lys-233. Residue Glu-249 coordinates (6S)-5,6,7,8-tetrahydrofolate.

Belongs to the SHMT family. As to quaternary structure, homodimer. Requires pyridoxal 5'-phosphate as cofactor.

The protein resides in the cytoplasm. The catalysed reaction is (6R)-5,10-methylene-5,6,7,8-tetrahydrofolate + glycine + H2O = (6S)-5,6,7,8-tetrahydrofolate + L-serine. The protein operates within one-carbon metabolism; tetrahydrofolate interconversion. It participates in amino-acid biosynthesis; glycine biosynthesis; glycine from L-serine: step 1/1. Catalyzes the reversible interconversion of serine and glycine with tetrahydrofolate (THF) serving as the one-carbon carrier. This reaction serves as the major source of one-carbon groups required for the biosynthesis of purines, thymidylate, methionine, and other important biomolecules. Also exhibits THF-independent aldolase activity toward beta-hydroxyamino acids, producing glycine and aldehydes, via a retro-aldol mechanism. The chain is Serine hydroxymethyltransferase from Synechococcus sp. (strain JA-3-3Ab) (Cyanobacteria bacterium Yellowstone A-Prime).